We begin with the raw amino-acid sequence, 1007 residues long: MVSKMIIENFEALKSWLSKTLEPICDADPSALAKYVLALVKKDKSEKELKALCIDQLDVFLQKETQIFVEKLFDAVNTKSYLPPPEQPSSGSLKVEFFPHQEKDIKKEEITKEEEREKKFSRRLNHSPPQSSSRYRENRSRDERKKDDRSRKRDYDRNPPRRDSYRDRYNRRRGRSRSYSRSRSRSWSKERLRERDRDRSRTRSRSRTRSRERDLVKPKYDLDRTDPLENNYTPVSSVPSISSGHYPVPTLSSTITVIAPTHHGNNTTESWSEFHEDQVDHNSYVRPPMPKKRCRDYDEKGFCMRGDMCPFDHGSDPVVVEDVNLPGMLPFPAQPPVVEGPPPPGLPPPPPILTPPPVNLRPPVPPPGPLPPSLPPVTGPPPPLPPLQPSGMDAPPNSATSSVPTVVTTGIHHQPPPAPPSLFTADTYDTDGYNPEAPSITNTSRPMYRHRVHAQRPNLIGLTSGDMDLPPREKPPNKSSMRIVVDSESRKRTIGSGEPGVPTKKTWFDKPNFNRTNSPGFQKKVQFGNENTKLELRKVPPELNNISKLNEHFSRFGTLVNLQVAYNGDPEGALIQFATYEEAKKAISSTEAVLNNRFIKVYWHREGSTQQLQTTSPKVMQPLVQQPILPVVKQSVKERLGPVPSSTIEPAEAQSASSDLPQNVTKLSVKDRLGFVSKPSVSATEKVLSTSTGLTKTVYNPAALKAAQKTLLVSTSAVDNNEAQKKKQEALKLQQDVRKRKQEILEKHIETQKMLISKLEKNKTMKSEDKAEIMKTLEVLTKNITKLKDEVKAASPGRCLPKSIKTKTQMQKELLDTELDLYKKMQAGEEVTELRRKYTELQLEAAKRGILSSGRGRGIHSRGRGAVHGRGRGRGRGRGVPGHAVVDHRPRALEISAFTESDREDLLPHFAQYGEIEDCQIDDSSLHAVITFKTRAEAEAAAVHGARFKGQDLKLAWNKPVTNISAVETEEVEPDEEEFQEESLVDDSLLQDDDEEEEDNESRSWRR.

A Glycyl lysine isopeptide (Lys-Gly) (interchain with G-Cter in SUMO2) cross-link involves residue K94. K106 is covalently cross-linked (Glycyl lysine isopeptide (Lys-Gly) (interchain with G-Cter in SUMO1); alternate). K106 is covalently cross-linked (Glycyl lysine isopeptide (Lys-Gly) (interchain with G-Cter in SUMO2); alternate). Basic and acidic residues predominate over residues K106–K118. The tract at residues K106–I241 is disordered. Phosphoserine is present on S127. Residues R134–R168 show a composition bias toward basic and acidic residues. The segment covering Y169–S186 has biased composition (basic residues). 2 stretches are compositionally biased toward basic and acidic residues: residues W187 to R201 and R209 to P227. The segment covering L228–I241 has biased composition (polar residues). The C3H1-type zinc finger occupies P288–D316. Positions Q334–Q388 are enriched in pro residues. Disordered stretches follow at residues Q334–P404 and I460–P519. A compositionally biased stretch (low complexity) spans A394–P404. The residue at position 496 (S496) is a Phosphoserine. K510 bears the N6-acetyllysine mark. S518 is subject to Phosphoserine. Residues T532–E606 enclose the RRM 1 domain. A Phosphoserine modification is found at S616. Coiled-coil stretches lie at residues D719 to S795 and K823 to K847. The segment at S853–A884 is disordered. Residues R857–G877 are compositionally biased toward basic residues. In terms of domain architecture, RRM 2 spans R891–P960. The interval A966–R1007 is disordered. Residues E968–N1000 are compositionally biased toward acidic residues.

In terms of biological role, may be involved in the turnover of nuclear polyadenylated (pA+) RNA. In Homo sapiens (Human), this protein is RNA-binding protein 26.